Consider the following 557-residue polypeptide: ABC1 family protein MCP2 homolog (557 aa).

The N-terminal 33 residues, 1–33 (MFSRFSWPRITRCFRSYPKKKSSCISFTHHARE), are a transit peptide targeting the mitochondrion. Over 34–39 (HTNFKK) the chain is Mitochondrial matrix. A helical membrane pass occupies residues 40 to 56 (PAVVGASITLMASVALV). At 57–557 (DFDPVKHAGV…NYFYYKHMYL (501 aa)) the chain is on the mitochondrial intermembrane side.

Belongs to the protein kinase superfamily. ADCK protein kinase family.

The protein resides in the mitochondrion inner membrane. Involved in mitochondrial lipid homeostasis. In Schizosaccharomyces pombe (strain 972 / ATCC 24843) (Fission yeast), this protein is ABC1 family protein MCP2 homolog.